Consider the following 405-residue polypeptide: MSPYGLNLSLVDEATTCVTPRVPNTSVVLPTGGNGTSPALPIFSMTLGAVSNVLALALLAQVAGRLRRRRSTATFLLFVASLLAIDLAGHVIPGALVLRLYTAGRAPAGGACHFLGGCMVFFGLCPLLLGCGMAVERCVGVTQPLIHAARVSVARARLALALLAAMALAVALLPLVHVGHYELQYPGTWCFISLGPPGGWRQALLAGLFAGLGLAALLAALVCNTLSGLALLRARWRRRRSRRFRENAGPDDRRRWGSRGLRLASASSASSITSTTAALRSSRGGGSARRVHAHDVEMVGQLVGIMVVSCICWSPLLVLVVLAIGGWNSNSLQRPLFLAVRLASWNQILDPWVYILLRQAMLRQLLRLLPLRVSAKGGPTELSLTKSAWEASSLRSSRHSGFSHL.

Residues 1-39 (MSPYGLNLSLVDEATTCVTPRVPNTSVVLPTGGNGTSPA) are Extracellular-facing. N-linked (GlcNAc...) asparagine glycans are attached at residues Asn-7, Asn-24, and Asn-34. A helical membrane pass occupies residues 40–62 (LPIFSMTLGAVSNVLALALLAQV). The Cytoplasmic portion of the chain corresponds to 63 to 80 (AGRLRRRRSTATFLLFVA). Residues 81 to 99 (SLLAIDLAGHVIPGALVLR) traverse the membrane as a helical segment. Topologically, residues 100–113 (LYTAGRAPAGGACH) are extracellular. Cys-112 and Cys-190 are disulfide-bonded. The helical transmembrane segment at 114 to 135 (FLGGCMVFFGLCPLLLGCGMAV) threads the bilayer. The Cytoplasmic segment spans residues 136–157 (ERCVGVTQPLIHAARVSVARAR). A helical membrane pass occupies residues 158 to 179 (LALALLAAMALAVALLPLVHVG). Over 180–202 (HYELQYPGTWCFISLGPPGGWRQ) the chain is Extracellular. The chain crosses the membrane as a helical span at residues 203–228 (ALLAGLFAGLGLAALLAALVCNTLSG). Topologically, residues 229 to 301 (LALLRARWRR…HAHDVEMVGQ (73 aa)) are cytoplasmic. The helical transmembrane segment at 302–323 (LVGIMVVSCICWSPLLVLVVLA) threads the bilayer. Topologically, residues 324–337 (IGGWNSNSLQRPLF) are extracellular. The helical transmembrane segment at 338–357 (LAVRLASWNQILDPWVYILL) threads the bilayer. Topologically, residues 358–405 (RQAMLRQLLRLLPLRVSAKGGPTELSLTKSAWEASSLRSSRHSGFSHL) are cytoplasmic.

It belongs to the G-protein coupled receptor 1 family. Phosphorylated. Highly abundant in kidney and lung. Found in a lesser extent in spleen, colon, and thymus. Also expressed in uterine myometrium and endometrium.

It localises to the cell membrane. Functionally, receptor for prostaglandin E2 (PGE2). The activity of this receptor is mediated by G(q) proteins which activate a phosphatidylinositol-calcium second messenger system. May play a role as an important modulator of renal function. Implicated the smooth muscle contractile response to PGE2 in various tissues. Isoform 1 and isoform 2 have identical ligand binding properties, but isoform 2 lacks coupling to calcium mobilization and may therefore attenuate the action of PGE2 on tissues. This chain is Prostaglandin E2 receptor EP1 subtype (Ptger1), found in Rattus norvegicus (Rat).